The sequence spans 513 residues: Putative zinc finger CCCH domain-containing protein 51 (513 aa).

Residues 155–180 are disordered; sequence SMPRNSPNAGRNLVGHPHSSSKSSSK. Residues 170 to 180 are compositionally biased toward low complexity; sequence HPHSSSKSSSK. Residues 176 to 204 form a C3H1-type zinc finger; it reads KSSSKPCHFHFFRGYCKKGVNCQFFHGSV. In terms of domain architecture, HTH OST-type spans 218 to 299; that stretch reads SLSKLDMEIR…HGQYHVVLVE (82 aa). An RRM domain is found at 325 to 411; the sequence is NQIYMTFPVH…SELRMTWLKS (87 aa).

This Oryza sativa subsp. japonica (Rice) protein is Putative zinc finger CCCH domain-containing protein 51.